The chain runs to 146 residues: Leghemoglobin Lb120-8 (146 aa).

One can recognise a Globin domain in the interval G2 to N146. Nitrated tyrosine is present on residues Y24 and Y29. Position 44 (S44) interacts with heme b. S44 carries the phosphoserine modification. H61 provides a ligand contact to O2. Residues K64, H93, and K96 each coordinate heme b. Residue Y134 is modified to Nitrated tyrosine.

It belongs to the plant globin family. As to quaternary structure, monomer. Post-translationally, nitrated in effective nodules and particularly in hypoxic conditions; this mechanism may play a protective role in the symbiosis by buffering toxic peroxynitrite NO(2)(-). Nitration level decrease during nodule senescence. In terms of processing, phosphorylation at Ser-44 disrupts the molecular environment of its porphyrin ring oxygen binding pocket, thus leading to a reduced oxygen consumption and to the delivery of oxygen O(2) to symbiosomes. Root nodules.

Its subcellular location is the cytoplasm. It is found in the cytosol. The protein resides in the nucleus. Leghemoglobin that reversibly binds oxygen O(2) through a pentacoordinated heme iron. In root nodules, facilitates the diffusion of oxygen to the bacteroids while preventing the bacterial nitrogenase from being inactivated by buffering dioxygen, nitric oxide and carbon monoxide, and promoting the formation of reactive oxygen species (ROS, e.g. H(2)O(2)). This role is essential for symbiotic nitrogen fixation (SNF). This Pisum sativum (Garden pea) protein is Leghemoglobin Lb120-8.